The primary structure comprises 337 residues: GTP 3',8-cyclase (337 aa).

Positions 17–243 constitute a Radical SAM core domain; the sequence is PFQRQYYYLR…HKSHTDGPAK (227 aa). Arg-26 is a binding site for GTP. [4Fe-4S] cluster is bound by residues Cys-33 and Cys-37. An S-adenosyl-L-methionine-binding site is contributed by Tyr-39. Cys-40 provides a ligand contact to [4Fe-4S] cluster. A GTP-binding site is contributed by Arg-76. S-adenosyl-L-methionine is bound at residue Gly-80. Thr-107 lines the GTP pocket. Ser-131 contributes to the S-adenosyl-L-methionine binding site. GTP is bound at residue Lys-168. Residue Met-202 coordinates S-adenosyl-L-methionine. [4Fe-4S] cluster-binding residues include Cys-265 and Cys-268. Residue 270–272 participates in GTP binding; sequence RLR. [4Fe-4S] cluster is bound at residue Cys-282.

The protein belongs to the radical SAM superfamily. MoaA family. In terms of assembly, monomer and homodimer. [4Fe-4S] cluster is required as a cofactor.

The enzyme catalyses GTP + AH2 + S-adenosyl-L-methionine = (8S)-3',8-cyclo-7,8-dihydroguanosine 5'-triphosphate + 5'-deoxyadenosine + L-methionine + A + H(+). It participates in cofactor biosynthesis; molybdopterin biosynthesis. Its function is as follows. Catalyzes the cyclization of GTP to (8S)-3',8-cyclo-7,8-dihydroguanosine 5'-triphosphate. The chain is GTP 3',8-cyclase from Haemophilus influenzae (strain 86-028NP).